The primary structure comprises 104 residues: L-rhamnose mutarotase (104 aa).

Residue Y18 coordinates substrate. Catalysis depends on H22, which acts as the Proton donor. Substrate contacts are provided by residues Y41 and 76–77 (WW).

This sequence belongs to the rhamnose mutarotase family. Homodimer.

Its subcellular location is the cytoplasm. It catalyses the reaction alpha-L-rhamnose = beta-L-rhamnose. Its pathway is carbohydrate metabolism; L-rhamnose metabolism. In terms of biological role, involved in the anomeric conversion of L-rhamnose. The sequence is that of L-rhamnose mutarotase from Salmonella agona (strain SL483).